Consider the following 144-residue polypeptide: Large ribosomal subunit protein uL16 (144 aa).

Belongs to the universal ribosomal protein uL16 family. As to quaternary structure, part of the 50S ribosomal subunit.

Its function is as follows. Binds 23S rRNA and is also seen to make contacts with the A and possibly P site tRNAs. The protein is Large ribosomal subunit protein uL16 of Halothermothrix orenii (strain H 168 / OCM 544 / DSM 9562).